Reading from the N-terminus, the 270-residue chain is MAVNVRTMWSSMRAQVAMVVALVFLVRGAWCGPPKVPPGKNITATYGKDWLDAKATWYGKPTGAGPDDNGGGCGYKDVNKPPFNSMGACGNIPIFKDGLGCGSCFEIKCDKPVECSGKPVVVHITDMNYEPIAAYHFDLAGTAFGAMAKKGEEEKLRKAGIIDMQFRRVKCKYDSKVTFHLEKGCGPNYLALLVKYVDGDGDIVAVDVKEKGSDTYEPLKHSWGAIWRKDSDKPLKGPLTVRLTTEGGTKSVYDDVIPANWKANTAYTAK.

The first 31 residues, 1–31 (MAVNVRTMWSSMRAQVAMVVALVFLVRGAWC), serve as a signal peptide directing secretion. A glycan (N-linked (GlcNAc...) asparagine) is linked at Asn-41. In terms of domain architecture, Expansin-like EG45 spans 70-176 (GGGCGYKDVN…RRVKCKYDSK (107 aa)). 3 disulfide bridges follow: Cys-73-Cys-101, Cys-104-Cys-171, and Cys-109-Cys-115. The 82-residue stretch at 188–269 (NYLALLVKYV…NWKANTAYTA (82 aa)) folds into the Expansin-like CBD domain.

The protein belongs to the expansin family. Expansin B subfamily. As to expression, expressed in pollen.

It is found in the secreted. The protein resides in the cell wall. The protein localises to the membrane. Its function is as follows. May aid fertilization by loosening the cell wall of the stigma and style, thereby facilitating penetration of the pollen tube. Acts selectively on grass cell walls, which are relatively poor in pectins and xyloglucans and rich in glucuronoarabinoxylans and (1-3),(1-4)-beta-D-glucans, when compared with cell walls of other angiosperms, including other monocots. In Zea mays (Maize), this protein is Expansin-B10 (EXPB10).